A 1510-amino-acid chain; its full sequence is Chromosome partition protein MukB (1510 aa).

A coiled-coil region spans residues 6–30 (ELENEIELESDEVIMENENVEEIVD). 75–82 (GGNGAGKS) lines the ATP pocket. Coiled coils occupy residues 346-506 (QHRL…HKMS), 553-633 (QQTP…NLTA), 673-706 (MQSQLVKERELTMQRDQLEQKRLQLDEQISRLSQ), 821-847 (RAAREKRLEELQIERDEVAEQYAQIAF), 876-1064 (EELM…IQLQ), 1094-1149 (ERAR…RELV), and 1249-1305 (DAIE…QNIS). The interval 707 to 824 (PDGSEDPRLN…EIPLFGRAAR (118 aa)) is flexible hinge.

It belongs to the SMC family. MukB subfamily. Homodimerization via its hinge domain. Binds to DNA via its C-terminal region. Interacts, and probably forms a ternary complex, with MukE and MukF via its C-terminal region. The complex formation is stimulated by calcium or magnesium. Interacts with tubulin-related protein FtsZ.

The protein localises to the cytoplasm. Its subcellular location is the nucleoid. Plays a central role in chromosome condensation, segregation and cell cycle progression. Functions as a homodimer, which is essential for chromosome partition. Involved in negative DNA supercoiling in vivo, and by this means organize and compact chromosomes. May achieve or facilitate chromosome segregation by condensation DNA from both sides of a centrally located replisome during cell division. The protein is Chromosome partition protein MukB of Haemophilus influenzae (strain 86-028NP).